The following is a 680-amino-acid chain: Chaperone protein dnaK3 (680 aa).

A Phosphothreonine; by autocatalysis modification is found at Thr205. Positions 640–680 (GRERRRDDDEDEWAEPPRTRRSRSYSQRADSAPWDDWDDDW) are disordered.

The protein belongs to the heat shock protein 70 family.

In terms of biological role, acts as a chaperone. This Thermosynechococcus vestitus (strain NIES-2133 / IAM M-273 / BP-1) protein is Chaperone protein dnaK3 (dnaK3).